The following is an 84-amino-acid chain: Sulfur carrier protein TusA (84 aa).

Residue cysteine 19 is the Cysteine persulfide intermediate of the active site.

It belongs to the sulfur carrier protein TusA family. In terms of assembly, interacts with IscS.

The protein resides in the cytoplasm. The protein operates within tRNA modification. In terms of biological role, sulfur carrier protein involved in sulfur trafficking in the cell. Part of a sulfur-relay system required for 2-thiolation during synthesis of 2-thiouridine of the modified wobble base 5-methylaminomethyl-2-thiouridine (mnm(5)s(2)U) in tRNA. Interacts with IscS and stimulates its cysteine desulfurase activity. Accepts an activated sulfur from IscS, which is then transferred to TusD, and thus determines the direction of sulfur flow from IscS to 2-thiouridine formation. Also appears to be involved in sulfur transfer for the biosynthesis of molybdopterin. The sequence is that of Sulfur carrier protein TusA from Sodalis glossinidius (strain morsitans).